The chain runs to 449 residues: Trigger factor (449 aa).

One can recognise a PPIase FKBP-type domain in the interval Gly162–Pro243. A compositionally biased stretch (basic and acidic residues) spans Gly428 to Phe437. Residues Gly428–Ala449 are disordered. Acidic residues predominate over residues Gly438–Ala449.

It belongs to the FKBP-type PPIase family. Tig subfamily.

It is found in the cytoplasm. The enzyme catalyses [protein]-peptidylproline (omega=180) = [protein]-peptidylproline (omega=0). In terms of biological role, involved in protein export. Acts as a chaperone by maintaining the newly synthesized protein in an open conformation. Functions as a peptidyl-prolyl cis-trans isomerase. The sequence is that of Trigger factor from Corynebacterium glutamicum (strain R).